The following is a 213-amino-acid chain: ATP phosphoribosyltransferase (213 aa).

The protein belongs to the ATP phosphoribosyltransferase family. Short subfamily. As to quaternary structure, heteromultimer composed of HisG and HisZ subunits.

The protein localises to the cytoplasm. It carries out the reaction 1-(5-phospho-beta-D-ribosyl)-ATP + diphosphate = 5-phospho-alpha-D-ribose 1-diphosphate + ATP. It participates in amino-acid biosynthesis; L-histidine biosynthesis; L-histidine from 5-phospho-alpha-D-ribose 1-diphosphate: step 1/9. Its function is as follows. Catalyzes the condensation of ATP and 5-phosphoribose 1-diphosphate to form N'-(5'-phosphoribosyl)-ATP (PR-ATP). Has a crucial role in the pathway because the rate of histidine biosynthesis seems to be controlled primarily by regulation of HisG enzymatic activity. This is ATP phosphoribosyltransferase from Bacillus velezensis (strain DSM 23117 / BGSC 10A6 / LMG 26770 / FZB42) (Bacillus amyloliquefaciens subsp. plantarum).